A 78-amino-acid polypeptide reads, in one-letter code: Apolipoprotein C-I (78 aa).

Positions 1–26 (MRLILWLPVLVVVLLMVTEGPAPAQG) are cleaved as a signal peptide.

The protein belongs to the apolipoprotein C1 family.

Its subcellular location is the secreted. In terms of biological role, inhibitor of lipoprotein binding to the low density lipoprotein (LDL) receptor, LDL receptor-related protein, and very low density lipoprotein (VLDL) receptor. Associates with high density lipoproteins (HDL) and the triacylglycerol-rich lipoproteins in the plasma and makes up about 10% of the protein of the VLDL and 2% of that of HDL. Appears to interfere directly with fatty acid uptake and is also the major plasma inhibitor of cholesteryl ester transfer protein (CETP). Binds free fatty acids and reduces their intracellular esterification. Modulates the interaction of APOE with beta-migrating VLDL and inhibits binding of beta-VLDL to the LDL receptor-related protein. In Panthera tigris altaica (Siberian tiger), this protein is Apolipoprotein C-I (APOC1).